We begin with the raw amino-acid sequence, 269 residues long: UPF0524 protein C3orf70 homolog A (269 aa).

Disordered regions lie at residues 139–203 (VQRP…DSGI) and 215–249 (DEDS…QDEC). Pro residues predominate over residues 141-150 (RPPPPTPNPT). Low complexity predominate over residues 151–164 (HQPQTAAPQPVPQR). Positions 179-191 (QAKEKISAPKMDH) are enriched in basic and acidic residues. The span at 215 to 233 (DEDSCVDDDDEEEEDDELS) shows a compositional bias: acidic residues.

It belongs to the UPF0524 family.

Plays a role in neuronal and neurobehavioral development. Required for normal expression of neuronal markers elavl3 and eno2 and neurobehaviors related to circadian rhythm and changes in light-dark conditions. This is UPF0524 protein C3orf70 homolog A from Danio rerio (Zebrafish).